Here is a 291-residue protein sequence, read N- to C-terminus: tRNA dimethylallyltransferase (291 aa).

Position 5–12 (5–12) interacts with ATP; it reads GPTAGGKS. 7–12 contributes to the substrate binding site; it reads TAGGKS. The interval 30 to 33 is interaction with substrate tRNA; sequence DSMQ.

It belongs to the IPP transferase family. Monomer. It depends on Mg(2+) as a cofactor.

It catalyses the reaction adenosine(37) in tRNA + dimethylallyl diphosphate = N(6)-dimethylallyladenosine(37) in tRNA + diphosphate. Catalyzes the transfer of a dimethylallyl group onto the adenine at position 37 in tRNAs that read codons beginning with uridine, leading to the formation of N6-(dimethylallyl)adenosine (i(6)A). This Frankia casuarinae (strain DSM 45818 / CECT 9043 / HFP020203 / CcI3) protein is tRNA dimethylallyltransferase.